Reading from the N-terminus, the 364-residue chain is Beta-parvin (364 aa).

The interval Met-1–Leu-57 is disordered. Position 7 is a phosphoserine (Ser-7). Positions Arg-36–Lys-46 are enriched in basic and acidic residues. Ser-54 carries the phosphoserine modification. Calponin-homology (CH) domains lie at Lys-87–Arg-194 and Ser-254–Lys-361.

Belongs to the parvin family. In terms of assembly, interacts with DYSF. Interacts with ILK, ARHGEF6, PXN (via LD motifs), ACTN2 and actin. In terms of tissue distribution, expressed predominantly in heart and skeletal muscle.

The protein resides in the cell junction. It localises to the focal adhesion. It is found in the cell membrane. Its subcellular location is the cytoplasm. The protein localises to the cytoskeleton. The protein resides in the cell projection. It localises to the lamellipodium. It is found in the myofibril. Its subcellular location is the sarcomere. The protein localises to the z line. Adapter protein that plays a role in integrin signaling via ILK and in activation of the GTPases CDC42 and RAC1 by guanine exchange factors, such as ARHGEF6. Is involved in the reorganization of the actin cytoskeleton and formation of lamellipodia. Plays a role in cell adhesion, cell spreading, establishment or maintenance of cell polarity, and cell migration. The chain is Beta-parvin (PARVB) from Homo sapiens (Human).